The sequence spans 361 residues: Chorismate synthase (361 aa).

Over residues 38–49 (EKDMQHDLDRRR) the composition is skewed to basic and acidic residues. Positions 38-58 (EKDMQHDLDRRRPGTSKYTTQ) are disordered. Arg48 contacts NADP(+). Residues 125-127 (RSS), 238-239 (NA), Gly278, 293-297 (KPTSS), and Arg319 each bind FMN.

This sequence belongs to the chorismate synthase family. In terms of assembly, homotetramer. FMNH2 is required as a cofactor.

It carries out the reaction 5-O-(1-carboxyvinyl)-3-phosphoshikimate = chorismate + phosphate. It functions in the pathway metabolic intermediate biosynthesis; chorismate biosynthesis; chorismate from D-erythrose 4-phosphate and phosphoenolpyruvate: step 7/7. Its function is as follows. Catalyzes the anti-1,4-elimination of the C-3 phosphate and the C-6 proR hydrogen from 5-enolpyruvylshikimate-3-phosphate (EPSP) to yield chorismate, which is the branch point compound that serves as the starting substrate for the three terminal pathways of aromatic amino acid biosynthesis. This reaction introduces a second double bond into the aromatic ring system. The polypeptide is Chorismate synthase (Photobacterium profundum (strain SS9)).